We begin with the raw amino-acid sequence, 283 residues long: Nucleotide-binding protein THEYE_A0235 (283 aa).

Residue 12–19 (GLSGGGKT) coordinates ATP. GTP is bound at residue 62–65 (DIRV).

It belongs to the RapZ-like family.

Functionally, displays ATPase and GTPase activities. This chain is Nucleotide-binding protein THEYE_A0235, found in Thermodesulfovibrio yellowstonii (strain ATCC 51303 / DSM 11347 / YP87).